A 406-amino-acid polypeptide reads, in one-letter code: uncharacterized protein (406 aa).

To S.pombe SpAC12C2.04.

It localises to the cytoplasm. The protein localises to the nucleus. This is an uncharacterized protein from Schizosaccharomyces pombe (strain 972 / ATCC 24843) (Fission yeast).